The following is a 227-amino-acid chain: Uracil phosphoribosyltransferase (227 aa).

36–40 (KGLVK) is a binding site for GTP. Residues arginine 86, arginine 111, and 145-153 (DPMLATGST) contribute to the 5-phospho-alpha-D-ribose 1-diphosphate site. Uracil contacts are provided by residues isoleucine 212 and 217-219 (GDA). Position 218 (aspartate 218) interacts with 5-phospho-alpha-D-ribose 1-diphosphate.

It belongs to the UPRTase family. It depends on Mg(2+) as a cofactor.

The enzyme catalyses UMP + diphosphate = 5-phospho-alpha-D-ribose 1-diphosphate + uracil. Its pathway is pyrimidine metabolism; UMP biosynthesis via salvage pathway; UMP from uracil: step 1/1. With respect to regulation, allosterically activated by GTP. Its function is as follows. Catalyzes the conversion of uracil and 5-phospho-alpha-D-ribose 1-diphosphate (PRPP) to UMP and diphosphate. This Halobacterium salinarum (strain ATCC 700922 / JCM 11081 / NRC-1) (Halobacterium halobium) protein is Uracil phosphoribosyltransferase.